The sequence spans 297 residues: Diaminopimelate epimerase (297 aa).

Residues asparagine 13, glutamine 46, and asparagine 66 each contribute to the substrate site. The active-site Proton donor is the cysteine 76. Substrate-binding positions include 77–78 (GN), asparagine 174, asparagine 207, and 225–226 (ER). The active-site Proton acceptor is the cysteine 234. 235-236 (GT) serves as a coordination point for substrate.

Belongs to the diaminopimelate epimerase family. As to quaternary structure, homodimer.

The protein resides in the cytoplasm. It carries out the reaction (2S,6S)-2,6-diaminopimelate = meso-2,6-diaminopimelate. It participates in amino-acid biosynthesis; L-lysine biosynthesis via DAP pathway; DL-2,6-diaminopimelate from LL-2,6-diaminopimelate: step 1/1. Functionally, catalyzes the stereoinversion of LL-2,6-diaminopimelate (L,L-DAP) to meso-diaminopimelate (meso-DAP), a precursor of L-lysine and an essential component of the bacterial peptidoglycan. This is Diaminopimelate epimerase from Leptothrix cholodnii (strain ATCC 51168 / LMG 8142 / SP-6) (Leptothrix discophora (strain SP-6)).